Reading from the N-terminus, the 41-residue chain is MKILSSLKSAKTRHKDCQVVRRRGKVYVINKTNPRFKARQR.

The protein belongs to the bacterial ribosomal protein bL36 family.

The protein is Large ribosomal subunit protein bL36 of Hydrogenovibrio crunogenus (strain DSM 25203 / XCL-2) (Thiomicrospira crunogena).